Reading from the N-terminus, the 179-residue chain is Peptide deformylase (179 aa).

Fe cation is bound by residues Cys102 and His144. Residue Glu145 is part of the active site. Position 148 (His148) interacts with Fe cation.

It belongs to the polypeptide deformylase family. Fe(2+) is required as a cofactor.

It catalyses the reaction N-terminal N-formyl-L-methionyl-[peptide] + H2O = N-terminal L-methionyl-[peptide] + formate. Functionally, removes the formyl group from the N-terminal Met of newly synthesized proteins. Requires at least a dipeptide for an efficient rate of reaction. N-terminal L-methionine is a prerequisite for activity but the enzyme has broad specificity at other positions. This is Peptide deformylase from Wolbachia sp. subsp. Drosophila simulans (strain wRi).